We begin with the raw amino-acid sequence, 204 residues long: Somatotropin (204 aa).

The first 17 residues, 1–17, serve as a signal peptide directing secretion; sequence MDRAVLLLSVLSLGVSS. Gln-18 carries the post-translational modification Pyrrolidone carboxylic acid. His-35 serves as a coordination point for Zn(2+). Cys-69 and Cys-177 are joined by a disulfide. Glu-186 contacts Zn(2+). Cys-194 and Cys-202 are joined by a disulfide.

It belongs to the somatotropin/prolactin family.

The protein resides in the secreted. In terms of biological role, growth hormone plays an important role in growth control and is involved in the regulation of several anabolic processes. Implicated as an osmoregulatory substance important for seawater adaptation. In Morone saxatilis (Striped bass), this protein is Somatotropin (gh).